The chain runs to 295 residues: Homeobox protein XHOX-7.1 (295 aa).

Disordered stretches follow at residues 75 to 115 (RKPG…PISL) and 134 to 175 (KPES…KPRT). Over residues 84–97 (SSPTGSPLAGTSHS) the composition is skewed to polar residues. Residues 141–153 (SSWIQSPSFSPSP) are compositionally biased toward low complexity. Residues 164–174 (LRKHKTNRKPR) show a composition bias toward basic residues. A DNA-binding region (homeobox) is located at residues 170–229 (NRKPRTPFTTSQLLALERKFRQKQYLSIAERAEFSSSLNLTETQVKIWFQNRRAKAKRLQ).

It belongs to the Msh homeobox family.

Its subcellular location is the nucleus. The sequence is that of Homeobox protein XHOX-7.1 from Xenopus laevis (African clawed frog).